Reading from the N-terminus, the 201-residue chain is Holliday junction branch migration complex subunit RuvA (201 aa).

The interval 1 to 64 (MFAFLRGELV…EDAQQLFGFL (64 aa)) is domain I. The domain II stretch occupies residues 65-143 (DEEELQLFRL…KIQPAASGKT (79 aa)). The tract at residues 144–154 (AGAPQALQLNE) is flexible linker. The interval 154-201 (EDALAALMTLGFPKPAAQKAISGILETSPGLSVEEVVRAALIAIHNNF) is domain III.

It belongs to the RuvA family. In terms of assembly, homotetramer. Forms an RuvA(8)-RuvB(12)-Holliday junction (HJ) complex. HJ DNA is sandwiched between 2 RuvA tetramers; dsDNA enters through RuvA and exits via RuvB. An RuvB hexamer assembles on each DNA strand where it exits the tetramer. Each RuvB hexamer is contacted by two RuvA subunits (via domain III) on 2 adjacent RuvB subunits; this complex drives branch migration. In the full resolvosome a probable DNA-RuvA(4)-RuvB(12)-RuvC(2) complex forms which resolves the HJ.

The protein resides in the cytoplasm. The RuvA-RuvB-RuvC complex processes Holliday junction (HJ) DNA during genetic recombination and DNA repair, while the RuvA-RuvB complex plays an important role in the rescue of blocked DNA replication forks via replication fork reversal (RFR). RuvA specifically binds to HJ cruciform DNA, conferring on it an open structure. The RuvB hexamer acts as an ATP-dependent pump, pulling dsDNA into and through the RuvAB complex. HJ branch migration allows RuvC to scan DNA until it finds its consensus sequence, where it cleaves and resolves the cruciform DNA. This Chlorobaculum tepidum (strain ATCC 49652 / DSM 12025 / NBRC 103806 / TLS) (Chlorobium tepidum) protein is Holliday junction branch migration complex subunit RuvA.